The following is a 186-amino-acid chain: Translation initiation factor IF-3 (186 aa).

The interval 1 to 20 (MINRSAGKDRDRSRSGDKEL) is disordered.

It belongs to the IF-3 family. In terms of assembly, monomer.

It localises to the cytoplasm. IF-3 binds to the 30S ribosomal subunit and shifts the equilibrium between 70S ribosomes and their 50S and 30S subunits in favor of the free subunits, thus enhancing the availability of 30S subunits on which protein synthesis initiation begins. In Borrelia hermsii (strain HS1 / DAH), this protein is Translation initiation factor IF-3.